Reading from the N-terminus, the 490-residue chain is Glutamyl-tRNA(Gln) amidotransferase subunit A (490 aa).

Active-site charge relay system residues include K78 and S153. The active-site Acyl-ester intermediate is S177.

It belongs to the amidase family. GatA subfamily. Heterotrimer of A, B and C subunits.

The catalysed reaction is L-glutamyl-tRNA(Gln) + L-glutamine + ATP + H2O = L-glutaminyl-tRNA(Gln) + L-glutamate + ADP + phosphate + H(+). In terms of biological role, allows the formation of correctly charged Gln-tRNA(Gln) through the transamidation of misacylated Glu-tRNA(Gln) in organisms which lack glutaminyl-tRNA synthetase. The reaction takes place in the presence of glutamine and ATP through an activated gamma-phospho-Glu-tRNA(Gln). This Desulforapulum autotrophicum (strain ATCC 43914 / DSM 3382 / VKM B-1955 / HRM2) (Desulfobacterium autotrophicum) protein is Glutamyl-tRNA(Gln) amidotransferase subunit A.